A 123-amino-acid polypeptide reads, in one-letter code: WAP four-disulfide core domain protein 5 (123 aa).

A signal peptide spans 1 to 24 (MRIQSLLLLGALLAVGSQLPAVFG). WAP domains are found at residues 27 to 73 (KGEK…CVPR) and 74 to 121 (VSVK…RDPA). Cystine bridges form between C34–C62, C41–C66, C49–C61, C55–C70, C81–C109, C88–C113, C96–C108, and C102–C117.

The protein resides in the secreted. Putative acid-stable proteinase inhibitor. The protein is WAP four-disulfide core domain protein 5 (WFDC5) of Chlorocebus aethiops (Green monkey).